Reading from the N-terminus, the 163-residue chain is Glyoxalase domain-containing protein 5 (163 aa).

A VOC domain is found at His41–Tyr161.

This sequence belongs to the glyoxalase I family.

The sequence is that of Glyoxalase domain-containing protein 5 (glod5) from Danio rerio (Zebrafish).